Here is a 307-residue protein sequence, read N- to C-terminus: Probable inactive peptidyl-prolyl cis-trans isomerase-like 6 (307 aa).

The PPIase cyclophilin-type domain maps to Phe141 to Gln304.

It belongs to the cyclophilin-type PPIase family.

Functionally, probable inactive PPIase with no peptidyl-prolyl cis-trans isomerase activity. This is Probable inactive peptidyl-prolyl cis-trans isomerase-like 6 from Bos taurus (Bovine).